A 127-amino-acid chain; its full sequence is MPEVAVKGATISKKGFKKAVTKTQKKEGRKRKRCRKESYSIYIYKVLKQVHPDTGISSKAMSIMNSFVTDIFERIASEASRLAHYNKRSTITSREIQTAVRLLLPGELAKHAVSEGTKAVTKYTSSK.

P2 carries the N-acetylproline modification. 7 positions are modified to N6-acetyllysine; alternate: K7, K13, K14, K17, K18, K22, and K25. K7, K13, K14, K17, K18, K22, K25, and K36 each carry N6-crotonyllysine; alternate. An N6-lactoyllysine; alternate mark is found at K7 and K13. Residue K7 forms a Glycyl lysine isopeptide (Lys-Gly) (interchain with G-Cter in SUMO2); alternate linkage. 4 positions are modified to N6-lactoyllysine; alternate: K17, K18, K22, and K25. K22 is covalently cross-linked (Glycyl lysine isopeptide (Lys-Gly) (interchain with G-Cter in SUMO2); alternate). N6-succinyllysine; alternate is present on K36. K36 participates in a covalent cross-link: Glycyl lysine isopeptide (Lys-Gly) (interchain with G-Cter in ubiquitin); alternate. S38 carries the post-translational modification Phosphoserine. K45 carries the N6-lactoyllysine; alternate modification. K48 bears the N6-methyllysine mark. K59 carries the N6,N6-dimethyllysine modification. R81 is subject to Dimethylated arginine. K87 carries the post-translational modification N6-acetyllysine; alternate. N6-lactoyllysine; alternate is present on K87. K87 bears the N6,N6,N6-trimethyllysine; alternate mark. 2 positions are modified to omega-N-methylarginine: R88 and R94. The residue at position 110 (K110) is an N6-lactoyllysine; alternate. At K110 the chain carries N6-methyllysine. T117 carries the phosphothreonine modification. 2 positions are modified to N6-lactoyllysine; alternate: K118 and K122. 2 positions are modified to N6-succinyllysine; alternate: K118 and K122. Position 118 is an N6-methylated lysine; alternate (K118). Residue K122 forms a Glycyl lysine isopeptide (Lys-Gly) (interchain with G-Cter in ubiquitin); alternate linkage.

This sequence belongs to the histone H2B family. In terms of assembly, the nucleosome is a histone octamer containing two molecules each of H2A, H2B, H3 and H4 assembled in one H3-H4 heterotetramer and two H2A-H2B heterodimers. Interacts with H2AB1; preferentially dimerizes with H2AB1 to form nucleosomes. In terms of processing, monoubiquitination at Lys-36 by the MSL1/MSL2 dimer is required for histone H3 'Lys-4' (H3K4me) and 'Lys-79' (H3K79me) methylation and transcription activation at specific gene loci, such as HOXA9 and MEIS1 loci. Similarly, monoubiquitination of Lys-122 (H2BK120Ub) by the RNF20/40 complex gives a specific tag for epigenetic transcriptional activation and is also prerequisite for histone H3 'Lys-4' and 'Lys-79' methylation. It also functions cooperatively with the FACT dimer to stimulate elongation by RNA polymerase II. H2BK120Ub also acts as a regulator of mRNA splicing: deubiquitination by USP49 is required for efficient cotranscriptional splicing of a large set of exons. Crotonylation (Kcr) is specifically present in male germ cells and marks testis-specific genes in post-meiotic cells, including X-linked genes that escape sex chromosome inactivation in haploid cells. Crotonylation marks active promoters and enhancers and confers resistance to transcriptional repressors. It is also associated with post-meiotically activated genes on autosomes. Post-translationally, acetylated during spermatogenesis. Acetylated form is most abundant in spermatogonia compared to spermatocytes and round spermatids. In terms of processing, phosphorylated at Thr-117 in spermatogonia, spermatocytes and round spermatids. Methylated at Lys-118 in spermatogonia, spermatocytes and round spermatids. Post-translationally, lactylated in macrophages by EP300/P300 by using lactoyl-CoA directly derived from endogenous or exogenous lactate, leading to stimulates gene transcription. Mainly expressed in testis, and the corresponding protein is also present in mature sperm. Also present in metaphase oocytes (at protein level).

The protein localises to the nucleus. It is found in the chromosome. Functionally, variant histone specifically required to direct the transformation of dissociating nucleosomes to protamine in male germ cells. Entirely replaces classical histone H2B prior nucleosome to protamine transition and probably acts as a nucleosome dissociating factor that creates a more dynamic chromatin, facilitating the large-scale exchange of histones. In condensing spermatids, the heterodimer between H2AB1 and H2BC1/TH2B is loaded onto the nucleosomes and promotes loading of transition proteins (TNP1 and TNP2) onto the nucleosomes. Inclusion of the H2AB1-H2BC1/TH2B dimer into chromatin opens the nucleosomes, releasing the nucleosomal DNA ends and allowing the invasion of nucleosomes by transition proteins (TNP1 and TNP2). Then, transition proteins drive the recruitment and processing of protamines, which are responsible for histone eviction. Also expressed maternally and is present in the female pronucleus, suggesting a similar role in protamine replacement by nucleosomes at fertilization. Core component of nucleosome. Nucleosomes wrap and compact DNA into chromatin, limiting DNA accessibility to the cellular machineries which require DNA as a template. Histones thereby play a central role in transcription regulation, DNA repair, DNA replication and chromosomal stability. DNA accessibility is regulated via a complex set of post-translational modifications of histones, also called histone code, and nucleosome remodeling. This Mus musculus (Mouse) protein is Histone H2B type 1-A.